A 300-amino-acid chain; its full sequence is D-alanine--D-alanine ligase (300 aa).

In terms of domain architecture, ATP-grasp spans 99–293 (KKILKYANIN…FAELLNSIVK (195 aa)). Residue 126 to 181 (IEKIGYPVFVKPNSGGSSVATNLVKDKEGIKEAVELALKYDKEVMIENYTKGEEIT) participates in ATP binding. Residues Asp248, Glu260, and Asn262 each coordinate Mg(2+).

This sequence belongs to the D-alanine--D-alanine ligase family. Requires Mg(2+) as cofactor. It depends on Mn(2+) as a cofactor.

The protein resides in the cytoplasm. The catalysed reaction is 2 D-alanine + ATP = D-alanyl-D-alanine + ADP + phosphate + H(+). Its pathway is cell wall biogenesis; peptidoglycan biosynthesis. Functionally, cell wall formation. The chain is D-alanine--D-alanine ligase from Clostridium botulinum (strain Okra / Type B1).